A 2290-amino-acid polypeptide reads, in one-letter code: Protein Ycf2 (2290 aa).

The disordered stretch occupies residues glycine 505–proline 530. The segment covering arginine 511–glutamine 523 has biased composition (basic and acidic residues). Glycine 1639–serine 1646 provides a ligand contact to ATP.

The protein belongs to the Ycf2 family.

Its subcellular location is the plastid. It localises to the chloroplast stroma. Its function is as follows. Probable ATPase of unknown function. Its presence in a non-photosynthetic plant (Epifagus virginiana) and experiments in tobacco indicate that it has an essential function which is probably not related to photosynthesis. This is Protein Ycf2 from Ceratophyllum demersum (Rigid hornwort).